The chain runs to 299 residues: Prohibitin-2 (299 aa).

Ala2 is modified (N-acetylalanine). Residues 19 to 49 (MGTALKLLLGAGAVAYGVRESVFTVEGGHRA) form a necessary for transcriptional repression region. Tyr128 is modified (phosphotyrosine). Lys147 carries the post-translational modification N6-acetyllysine. The necessary for transcriptional repression stretch occupies residues 150-174 (ASQLITQRAQVSLLIRRELTERAKD). Residue Ser151 is modified to Phosphoserine. The stretch at 190–238 (SREYTAAVEAKQVAQQEAQRAQFLVEKAKQEQRQKIVQAEGEAEAAKML) forms a coiled coil. N6-acetyllysine is present on residues Lys200, Lys236, Lys250, and Lys262.

The protein belongs to the prohibitin family. In terms of assembly, the mitochondrial prohibitin complex consists of two subunits (PHB1 and PHB2), assembled into a membrane-associated ring-shaped supercomplex of approximately 1 mDa. Interacts with ESR1, HDAC1 and HDAC5. Interacts with ZNF703. Interacts with STOML2. Interacts with ARFGEF3. Interacts with SPHK2. Interacts with COX4I1; the interaction associates PHB2 with COX. Interacts with MAP1LC3B (membrane-bound form LC3-II); the interaction is direct and upon mitochondrial depolarization and proteasome-dependent outer membrane rupture. Interacts with IGFBP6 (via C-terminal domain). Interacts with CLPB. Interacts with CD86 (via cytoplasmic domain); the interactions increases after priming with CD40. Interacts with AFG3L2. Interacts with DNAJC19. Interacts with AKT2; this interaction may be important for myogenic differentiation. Post-translationally, phosphorylated. Tyrosine phosphorylation is indirectly stimulated by IGFBP6.

The protein resides in the mitochondrion inner membrane. It is found in the cytoplasm. Its subcellular location is the nucleus. It localises to the cell membrane. In terms of biological role, protein with pleiotropic attributes mediated in a cell-compartment- and tissue-specific manner, which include the plasma membrane-associated cell signaling functions, mitochondrial chaperone, and transcriptional co-regulator of transcription factors and sex steroid hormones in the nucleus. Its function is as follows. In the mitochondria, together with PHB, forms large ring complexes (prohibitin complexes) in the inner mitochondrial membrane (IMM) and functions as a chaperone protein that stabilizes mitochondrial respiratory enzymes and maintains mitochondrial integrity in the IMM, which is required for mitochondrial morphogenesis, neuronal survival, and normal lifespan. The prohibitin complex, with DNAJC19, regulates cardiolipin remodeling and the protein turnover of OMA1 in a cardiolipin-binding manner. Also regulates cytochrome-c oxidase assembly (COX) and mitochondrial respiration. Binding to sphingoid 1-phosphate (SPP) modulates its regulator activity. Has a key role of mitophagy receptor involved in targeting mitochondria for autophagic degradation. Involved in mitochondrial-mediated antiviral innate immunity, activates RIG-I-mediated signal transduction and production of IFNB1 and pro-inflammatory cytokine IL6. Functionally, in the nucleus, serves as transcriptional co-regulator. Acts as a mediator of transcriptional repression by nuclear hormone receptors via recruitment of histone deacetylases. Functions as an estrogen receptor (ER)-selective coregulator that potentiates the inhibitory activities of antiestrogens and represses the activity of estrogens. Competes with NCOA1 for modulation of ER transcriptional activity. In the plasma membrane, is involved in IGFBP6-induced cell migration. Cooperates with CD86 to mediate CD86-signaling in B lymphocytes that regulates the level of IgG1 produced through the activation of distal signaling intermediates. Upon CD40 engagement, required to activate NF-kappa-B signaling pathway via phospholipase C and protein kinase C activation. This is Prohibitin-2 (PHB2) from Pongo abelii (Sumatran orangutan).